Here is a 266-residue protein sequence, read N- to C-terminus: Type III pantothenate kinase (266 aa).

D6–V13 provides a ligand contact to ATP. Substrate contacts are provided by residues Y100 and G107 to R110. Residue D109 is the Proton acceptor of the active site. D129 contributes to the K(+) binding site. T132 is an ATP binding site. T184 contributes to the substrate binding site.

Belongs to the type III pantothenate kinase family. In terms of assembly, homodimer. NH4(+) is required as a cofactor. K(+) serves as cofactor.

It localises to the cytoplasm. The catalysed reaction is (R)-pantothenate + ATP = (R)-4'-phosphopantothenate + ADP + H(+). It functions in the pathway cofactor biosynthesis; coenzyme A biosynthesis; CoA from (R)-pantothenate: step 1/5. In terms of biological role, catalyzes the phosphorylation of pantothenate (Pan), the first step in CoA biosynthesis. This Clostridium beijerinckii (strain ATCC 51743 / NCIMB 8052) (Clostridium acetobutylicum) protein is Type III pantothenate kinase.